Consider the following 253-residue polypeptide: Non-homologous end joining protein Ku (253 aa).

A Ku domain is found at 9 to 192 (ISFGLVNIPV…EITEEELELA (184 aa)).

This sequence belongs to the prokaryotic Ku family. As to quaternary structure, homodimer. Interacts with LigD.

Functionally, with LigD forms a non-homologous end joining (NHEJ) DNA repair enzyme, which repairs dsDNA breaks with reduced fidelity. Binds linear dsDNA with 5'- and 3'- overhangs but not closed circular dsDNA nor ssDNA. Recruits and stimulates the ligase activity of LigD. The sequence is that of Non-homologous end joining protein Ku from Archaeoglobus fulgidus (strain ATCC 49558 / DSM 4304 / JCM 9628 / NBRC 100126 / VC-16).